The sequence spans 149 residues: D-aminoacyl-tRNA deacylase (149 aa).

A Gly-cisPro motif, important for rejection of L-amino acids motif is present at residues 137 to 138 (GP).

It belongs to the DTD family. Homodimer.

It localises to the cytoplasm. It carries out the reaction glycyl-tRNA(Ala) + H2O = tRNA(Ala) + glycine + H(+). It catalyses the reaction a D-aminoacyl-tRNA + H2O = a tRNA + a D-alpha-amino acid + H(+). Its function is as follows. An aminoacyl-tRNA editing enzyme that deacylates mischarged D-aminoacyl-tRNAs. Also deacylates mischarged glycyl-tRNA(Ala), protecting cells against glycine mischarging by AlaRS. Acts via tRNA-based rather than protein-based catalysis; rejects L-amino acids rather than detecting D-amino acids in the active site. By recycling D-aminoacyl-tRNA to D-amino acids and free tRNA molecules, this enzyme counteracts the toxicity associated with the formation of D-aminoacyl-tRNA entities in vivo and helps enforce protein L-homochirality. This is D-aminoacyl-tRNA deacylase from Clostridium kluyveri (strain ATCC 8527 / DSM 555 / NBRC 12016 / NCIMB 10680 / K1).